Reading from the N-terminus, the 436-residue chain is GTPase Obg (436 aa).

Residues 2 to 160 (SMFLDTAKIK…RELQLELKIL (159 aa)) form the Obg domain. Residues 161–338 (ADVGLVGFPS…LLDATAELLD (178 aa)) enclose the OBG-type G domain. Residues 167–174 (GFPSVGKS), 192–196 (FTTIV), 214–217 (DLPG), 284–287 (NKMD), and 319–321 (SGL) contribute to the GTP site. 2 residues coordinate Mg(2+): Ser-174 and Thr-194. An OCT domain is found at 358–436 (GFDEEEKAFE…IGKFEFEFVD (79 aa)).

The protein belongs to the TRAFAC class OBG-HflX-like GTPase superfamily. OBG GTPase family. Monomer. Requires Mg(2+) as cofactor.

The protein localises to the cytoplasm. Its function is as follows. An essential GTPase which binds GTP, GDP and possibly (p)ppGpp with moderate affinity, with high nucleotide exchange rates and a fairly low GTP hydrolysis rate. Plays a role in control of the cell cycle, stress response, ribosome biogenesis and in those bacteria that undergo differentiation, in morphogenesis control. The sequence is that of GTPase Obg from Streptococcus pneumoniae (strain CGSP14).